We begin with the raw amino-acid sequence, 159 residues long: SsrA-binding protein (159 aa).

Residues K138–V159 form a disordered region.

The protein belongs to the SmpB family.

The protein resides in the cytoplasm. Required for rescue of stalled ribosomes mediated by trans-translation. Binds to transfer-messenger RNA (tmRNA), required for stable association of tmRNA with ribosomes. tmRNA and SmpB together mimic tRNA shape, replacing the anticodon stem-loop with SmpB. tmRNA is encoded by the ssrA gene; the 2 termini fold to resemble tRNA(Ala) and it encodes a 'tag peptide', a short internal open reading frame. During trans-translation Ala-aminoacylated tmRNA acts like a tRNA, entering the A-site of stalled ribosomes, displacing the stalled mRNA. The ribosome then switches to translate the ORF on the tmRNA; the nascent peptide is terminated with the 'tag peptide' encoded by the tmRNA and targeted for degradation. The ribosome is freed to recommence translation, which seems to be the essential function of trans-translation. This chain is SsrA-binding protein, found in Alteromonas mediterranea (strain DSM 17117 / CIP 110805 / LMG 28347 / Deep ecotype).